The chain runs to 538 residues: Nicotinate phosphoribosyltransferase (538 aa).

Positions 21 and 210 each coordinate nicotinate. His213 is modified (phosphohistidine). Arg318 contributes to the nicotinate binding site. Thr380 contacts 5-phospho-alpha-D-ribose 1-diphosphate.

It belongs to the NAPRTase family. In terms of assembly, homodimer. Mg(2+) serves as cofactor. The cofactor is Mn(2+). In terms of processing, transiently phosphorylated on a His residue during the reaction cycle. Phosphorylation strongly increases the affinity for substrates and increases the rate of nicotinate D-ribonucleotide production. Dephosphorylation regenerates the low-affinity form of the enzyme, leading to product release. As to expression, abundantly expressed in the small intestine, liver and kidney.

The protein resides in the cytoplasm. It localises to the cytosol. The enzyme catalyses nicotinate + 5-phospho-alpha-D-ribose 1-diphosphate + ATP + H2O = nicotinate beta-D-ribonucleotide + ADP + phosphate + diphosphate. It participates in cofactor biosynthesis; NAD(+) biosynthesis; nicotinate D-ribonucleotide from nicotinate: step 1/1. Catalyzes the first step in the biosynthesis of NAD from nicotinic acid, the ATP-dependent synthesis of beta-nicotinate D-ribonucleotide from nicotinate and 5-phospho-D-ribose 1-phosphate. Helps prevent cellular oxidative stress via its role in NAD biosynthesis. This chain is Nicotinate phosphoribosyltransferase (Naprt), found in Mus musculus (Mouse).